The sequence spans 252 residues: 5'-nucleotidase SurE (252 aa).

4 residues coordinate a divalent metal cation: Asp8, Asp9, Ser39, and Asn91.

The protein belongs to the SurE nucleotidase family. A divalent metal cation is required as a cofactor.

The protein resides in the cytoplasm. It carries out the reaction a ribonucleoside 5'-phosphate + H2O = a ribonucleoside + phosphate. Functionally, nucleotidase that shows phosphatase activity on nucleoside 5'-monophosphates. In Paraburkholderia xenovorans (strain LB400), this protein is 5'-nucleotidase SurE.